A 273-amino-acid chain; its full sequence is MSILEKITSSPSECAEHITNKDSCLSKKIQKELTSFLQKKETLGCDSESCVITHPAVKAYAQQKGLDLSKELETRFKAPGPRNNTGLLTNFNIDETLQRWAIKYTKFFNCPFSMMDFERIHYKFNQVDMVKVYKGEELQYVEGKAVKRPCNTFGCVLNTDFSTGTGKHWVAIFVDMRGDCWSIEYFNSAGNSPPGPVIRWMERVKQQLLKIHHTVKTLAVTNIRHQRSQTECGPYSLFYIRARLDNVSYTHFISTRITDEEMYKFRTHLFRIA.

Catalysis depends on residues H168 and N187. Q226 provides a ligand contact to substrate. The active-site Nucleophile is the C232.

It belongs to the peptidase C63 family.

Its subcellular location is the host cytoplasm. It is found in the virion. In terms of biological role, cysteine protease that plays several role during infection including processing of the structural polyprotein or inhibition of the host immune response. Catalyzes the maturation of the pp220 and pp62 polyprotein precursors into core-shell proteins. Plays a role in the disruption of host pyroptosis via specific cleavage of gasdermin D/GSDMD. In addition, strongly decreases the host cGAS-STING signaling by targeting IKBKE via its enzymatic activity. Also impairs host FOXJ1-mediated antiviral effect via degradation of FOXJ1. The sequence is that of SUMO-1 cysteine protease S273R from Ornithodoros (relapsing fever ticks).